Consider the following 609-residue polypeptide: Chaperone protein DnaK (609 aa).

Position 173 is a phosphothreonine; by autocatalysis (T173). Residues 525–542 (ENISDEDKKNAEEKKDAL) are compositionally biased toward basic and acidic residues. 2 disordered regions span residues 525-554 (ENIS…IDDI) and 574-609 (EQAQ…EDKK). The span at 574 to 587 (EQAQQAQQQGQEEQ) shows a compositional bias: low complexity. Basic and acidic residues predominate over residues 597–609 (ADFKEVKDDEDKK).

Belongs to the heat shock protein 70 family.

Its function is as follows. Acts as a chaperone. This Staphylococcus epidermidis (strain ATCC 35984 / DSM 28319 / BCRC 17069 / CCUG 31568 / BM 3577 / RP62A) protein is Chaperone protein DnaK.